Here is a 495-residue protein sequence, read N- to C-terminus: Leucine aminopeptidase 2 (495 aa).

A signal peptide spans 1-21 (MKTQLLSLGVALTAISQGVIA). The PA domain occupies 124–218 (PPADKITAEL…ADGKNLASLV (95 aa)). N-linked (GlcNAc...) asparagine glycans are attached at residues Asn142 and Asn235. The Zn(2+) site is built by His259 and Asp271. The N-linked (GlcNAc...) asparagine glycan is linked to Asn272. Catalysis depends on Glu303, which acts as the Proton acceptor. Zn(2+)-binding residues include Glu304 and Asp332. A glycan (N-linked (GlcNAc...) asparagine) is linked at Asn352. His430 is a Zn(2+) binding site. The tract at residues 464-495 (GFPTRPKTGKRDVSPRGQSMPGGGCGHHSVFM) is disordered.

This sequence belongs to the peptidase M28 family. M28A subfamily. Monomer. Zn(2+) is required as a cofactor.

The protein resides in the secreted. In terms of biological role, extracellular aminopeptidase that releases a wide variety of amino acids from natural peptides and contributes to pathogenicity. The chain is Leucine aminopeptidase 2 (LAP2) from Arthroderma otae (strain ATCC MYA-4605 / CBS 113480) (Microsporum canis).